A 193-amino-acid polypeptide reads, in one-letter code: Holliday junction branch migration complex subunit RuvA (193 aa).

The segment at 1-64 is domain I; the sequence is MIGRIAGTLI…EDAHLLYGFG (64 aa). A domain II region spans residues 65-143; that stretch reads SAAERNTFRE…AELGHAPGAA (79 aa). The segment at 144-151 is flexible linker; sequence PVHDSAVD. The tract at residues 151 to 193 is domain III; the sequence is DILNALLALGYSEKEAATAIKQVPAGTGVSDGIKLALKALSKA.

The protein belongs to the RuvA family. In terms of assembly, homotetramer. Forms an RuvA(8)-RuvB(12)-Holliday junction (HJ) complex. HJ DNA is sandwiched between 2 RuvA tetramers; dsDNA enters through RuvA and exits via RuvB. An RuvB hexamer assembles on each DNA strand where it exits the tetramer. Each RuvB hexamer is contacted by two RuvA subunits (via domain III) on 2 adjacent RuvB subunits; this complex drives branch migration. In the full resolvosome a probable DNA-RuvA(4)-RuvB(12)-RuvC(2) complex forms which resolves the HJ.

The protein localises to the cytoplasm. Functionally, the RuvA-RuvB-RuvC complex processes Holliday junction (HJ) DNA during genetic recombination and DNA repair, while the RuvA-RuvB complex plays an important role in the rescue of blocked DNA replication forks via replication fork reversal (RFR). RuvA specifically binds to HJ cruciform DNA, conferring on it an open structure. The RuvB hexamer acts as an ATP-dependent pump, pulling dsDNA into and through the RuvAB complex. HJ branch migration allows RuvC to scan DNA until it finds its consensus sequence, where it cleaves and resolves the cruciform DNA. The sequence is that of Holliday junction branch migration complex subunit RuvA from Cupriavidus pinatubonensis (strain JMP 134 / LMG 1197) (Cupriavidus necator (strain JMP 134)).